The sequence spans 387 residues: Cysteine desulfurase (387 aa).

Residues Gly-72 to Thr-73, Asn-152, Gln-180, and Ser-200 to His-202 each bind pyridoxal 5'-phosphate. Lys-203 is subject to N6-(pyridoxal phosphate)lysine. Position 238 (Thr-238) interacts with pyridoxal 5'-phosphate. Cys-326 serves as the catalytic Cysteine persulfide intermediate. A [2Fe-2S] cluster-binding site is contributed by Cys-326.

This sequence belongs to the class-V pyridoxal-phosphate-dependent aminotransferase family. NifS/IscS subfamily. As to quaternary structure, homodimer. The cofactor is pyridoxal 5'-phosphate.

The catalysed reaction is (sulfur carrier)-H + L-cysteine = (sulfur carrier)-SH + L-alanine. Its function is as follows. Catalyzes the removal of elemental sulfur atoms from cysteine to produce alanine. Seems to participate in the biosynthesis of the nitrogenase metalloclusters by providing the inorganic sulfur required for the Fe-S core formation. In Sinorhizobium fredii (strain NBRC 101917 / NGR234), this protein is Cysteine desulfurase.